A 146-amino-acid chain; its full sequence is Hemoglobin subunit beta-C (146 aa).

The region spanning 2–146 is the Globin domain; it reads EWTDFERATI…VVSSLGRQYH (145 aa). Residues His-63 and His-92 each contribute to the heme b site.

It belongs to the globin family. HbC is a heterotetramer of two alpha chains and two beta-C chains. Red blood cells.

Its function is as follows. Involved in oxygen transport from gills to the various peripheral tissues. This Trematomus bernacchii (Emerald rockcod) protein is Hemoglobin subunit beta-C (hbbc).